We begin with the raw amino-acid sequence, 152 residues long: SsrA-binding protein (152 aa).

Belongs to the SmpB family.

It is found in the cytoplasm. In terms of biological role, required for rescue of stalled ribosomes mediated by trans-translation. Binds to transfer-messenger RNA (tmRNA), required for stable association of tmRNA with ribosomes. tmRNA and SmpB together mimic tRNA shape, replacing the anticodon stem-loop with SmpB. tmRNA is encoded by the ssrA gene; the 2 termini fold to resemble tRNA(Ala) and it encodes a 'tag peptide', a short internal open reading frame. During trans-translation Ala-aminoacylated tmRNA acts like a tRNA, entering the A-site of stalled ribosomes, displacing the stalled mRNA. The ribosome then switches to translate the ORF on the tmRNA; the nascent peptide is terminated with the 'tag peptide' encoded by the tmRNA and targeted for degradation. The ribosome is freed to recommence translation, which seems to be the essential function of trans-translation. The sequence is that of SsrA-binding protein from Sulfurihydrogenibium sp. (strain YO3AOP1).